Here is a 512-residue protein sequence, read N- to C-terminus: Gustatory and odorant receptor 63a (512 aa).

Positions 1–24 (MRPSGEKVVKGHGQGNSGHSLSGM) are disordered. The Cytoplasmic segment spans residues 1–129 (MRPSGEKVVK…PARAKFEMNS (129 aa)). A helical membrane pass occupies residues 130-150 (ASFIYSVVFFVLLACYVGYVA). Over 151 to 166 (NNRIHIVRSLSGPFEE) the chain is Extracellular. A helical transmembrane segment spans residues 167 to 187 (AVIAYLFLVNILPIMIIPILW). Over 188 to 222 (YEARKIAKLFNDWDDFEVLYYQISGHSLPLKLRQK) the chain is Cytoplasmic. Residues 223-243 (AVYIAIVLPILSVLSVVITHV) form a helical membrane-spanning segment. Residues 244–265 (TMSDLNINQVVPYCILDNLTAM) are Extracellular-facing. Asn-261 is a glycosylation site (N-linked (GlcNAc...) asparagine). The chain crosses the membrane as a helical span at residues 266–285 (LGAWWFLICEAMSITAHLLA). Residues 286 to 324 (ERFQKALKHIGPAAMVADYRVLWLRLSKLTRDTGNALCY) lie on the Cytoplasmic side of the membrane. The helical transmembrane segment at 325-345 (TFVFMSLYLFFIITLSIYGLM) threads the bilayer. Over 346 to 350 (SQLSE) the chain is Extracellular. The chain crosses the membrane as a helical span at residues 351–371 (GFGIKDIGLTITALWNIGLLF). The Cytoplasmic segment spans residues 372–436 (YICDEAHYAS…FFDVNRTLFK (65 aa)). The chain crosses the membrane as a helical span at residues 437–457 (GLLTTMVTYLVVLLQFQISIP). Residues 458-512 (TDKGDSEGANNITVVDFVMDSLDNDMSLMGASTLSTTTVGTTLPPPIMKLKGRKG) are Extracellular-facing. N-linked (GlcNAc...) asparagine glycosylation is present at Asn-468.

It belongs to the insect chemoreceptor superfamily. Gustatory receptor (GR) family. Gr21a subfamily. As to quaternary structure, gr21a and Gr63a probably form a heterodimer that responds to CO(2). In terms of tissue distribution, expressed in the medial aspect of the third antennal segment. Carbon dioxide-responsive neurons coexpress Gr21a and Gr63a in a pair of chemosensory receptors at both larval and adult life stages.

The protein resides in the cell membrane. Its function is as follows. Gustatory and odorant receptor which mediates acceptance or avoidance behavior, depending on its substrates. Gr21a and Gr63a together are sufficient for carbon dioxide detection and avoidance behavior. It is possible that the CO(2) receptors Gr63a and Gr21a activate the TRPC channels through Galpha49B and Plc21C. This innate olfactory avoidance behavior can be inhibited by inhibitory interactions of the odors such as 1-hexanol and 2,3-butanedione with Gr21a and Gr63a. This is Gustatory and odorant receptor 63a (Gr63a) from Drosophila melanogaster (Fruit fly).